The following is a 681-amino-acid chain: MSGQEKSDKSVDMWSFLRCLGYLSSFNLLVAVCLGMYVRWEQTSEPMILVLFILGLFVSAIACILYYYFSMESASLSLFHLWFGFLQGLLCFLNSPSLEDEIKEQVTNYLLLSSVSIRTLWALTERLCANPKYKPVVITSSELLELLGFGVASISLVFDKSLAMIALTFALTALIIDLRMKSPLALPNLACFSVIAAVTFFQSLKIQTNPFALSCYLGRLICEPLLDVYFSSLTATERWKQFLSAGRLWRRFSLFPLALVELLFFVVCAFKLGNLKDWYLVIPGFCIFGLLWILCHMVFLVTLWCFHTKLSECQKMWAAQRLQTLNLDRIMASRGMRHFCLISERLVLFCLMSTIILGAVSWQVANGLFMSVFLVVLPLESLAHGLFHELGNGLGGTCVGYAVVIPTCYSSADGQPVLLPPGQVQELHSTSTLNAVQRLFSHHLIQTFGCDYSTSLSLETLLVKLRSFLELCTAEGPRHDTYILYYSGHTLPSGDWTLAGGDYLRMKQILDMWREQNSSFSSRLILVLDTENSAPWVKAVRKVEGMYVAVQGAKLSPVQDAEGQDAPRLGDFTSEWVKYNCDPESGVQWSERGRVISAIYGVSKPWSDYALHLPTGSDVAKHWKTHFPKTTYPLVAVANWCCGLNLLWLCSVCLRCVRRLKLSWFPPSILDTGQGIKLVRS.

The next 9 helical transmembrane spans lie at F16 to M36, M47 to Y67, S73 to L93, P135 to S155, L156 to I176, L184 to L204, F252 to L272, V281 to V301, and L346 to A365. The N-linked (GlcNAc...) asparagine glycan is linked to N517.

Belongs to the TMEM168 family.

Its subcellular location is the nucleus membrane. Its function is as follows. Plays a key role in maintaining the cardiac electrical stability by modulating cell surface expression of SCN5A. In Danio rerio (Zebrafish), this protein is Transmembrane protein 168-A (tmem168a).